Here is a 216-residue protein sequence, read N- to C-terminus: DNA gyrase subunit B (216 aa).

One can recognise a Toprim domain in the interval Ser140 to Ile216.

This sequence belongs to the type II topoisomerase GyrB family. Heterotetramer, composed of two GyrA and two GyrB chains. In the heterotetramer, GyrA contains the active site tyrosine that forms a transient covalent intermediate with DNA, while GyrB binds cofactors and catalyzes ATP hydrolysis.

It localises to the cytoplasm. The enzyme catalyses ATP-dependent breakage, passage and rejoining of double-stranded DNA.. In terms of biological role, a type II topoisomerase that negatively supercoils closed circular double-stranded (ds) DNA in an ATP-dependent manner to modulate DNA topology and maintain chromosomes in an underwound state. Negative supercoiling favors strand separation, and DNA replication, transcription, recombination and repair, all of which involve strand separation. Also able to catalyze the interconversion of other topological isomers of dsDNA rings, including catenanes and knotted rings. Type II topoisomerases break and join 2 DNA strands simultaneously in an ATP-dependent manner. The sequence is that of DNA gyrase subunit B (gyrB) from Acinetobacter venetianus (strain ATCC 31012 / DSM 23050 / BCRC 14357 / CCUG 45561 / CIP 110063 / KCTC 2702 / LMG 19082 / RAG-1).